An 86-amino-acid polypeptide reads, in one-letter code: Large ribosomal subunit protein uL23 (86 aa).

The protein belongs to the universal ribosomal protein uL23 family. As to quaternary structure, part of the 50S ribosomal subunit. Contacts protein L29.

Its function is as follows. Binds to 23S rRNA. One of the proteins that surrounds the polypeptide exit tunnel on the outside of the ribosome. This Methanococcus maripaludis (strain C6 / ATCC BAA-1332) protein is Large ribosomal subunit protein uL23.